The chain runs to 38 residues: Photosystem II reaction center protein L (38 aa).

Residues 17–37 form a helical membrane-spanning segment; that stretch reads SLYWGLLLIFVLAVSFSNYFF.

The protein belongs to the PsbL family. In terms of assembly, PSII is composed of 1 copy each of membrane proteins PsbA, PsbB, PsbC, PsbD, PsbE, PsbF, PsbH, PsbI, PsbJ, PsbK, PsbL, PsbM, PsbT, PsbX, PsbY, PsbZ, Psb30/Ycf12, at least 3 peripheral proteins of the oxygen-evolving complex and a large number of cofactors. It forms dimeric complexes.

Its subcellular location is the plastid. The protein localises to the chloroplast thylakoid membrane. Its function is as follows. One of the components of the core complex of photosystem II (PSII). PSII is a light-driven water:plastoquinone oxidoreductase that uses light energy to abstract electrons from H(2)O, generating O(2) and a proton gradient subsequently used for ATP formation. It consists of a core antenna complex that captures photons, and an electron transfer chain that converts photonic excitation into a charge separation. This subunit is found at the monomer-monomer interface and is required for correct PSII assembly and/or dimerization. The sequence is that of Photosystem II reaction center protein L from Amborella trichopoda.